Here is a 276-residue protein sequence, read N- to C-terminus: Protein HemX (276 aa).

The next 8 helical transmembrane spans lie at L9 to L29, F40 to V60, V66 to V86, V93 to F113, L132 to F152, V187 to A207, F217 to I237, and V247 to G267.

It to M.leprae U1620K.

It is found in the cell membrane. Required for HemL synthesis. The chain is Protein HemX (hemX) from Bacillus subtilis (strain 168).